A 309-amino-acid polypeptide reads, in one-letter code: NADH-quinone oxidoreductase subunit C (309 aa).

Residues 198-309 (LPGDEKAVPP…RTRKKKEDGE (112 aa)) form a disordered region. Positions 220 to 230 (TKGDAKADVPK) are enriched in basic and acidic residues. A compositionally biased stretch (low complexity) spans 246–261 (DAAAKPVAEAAAPAAT).

Belongs to the complex I 30 kDa subunit family. In terms of assembly, NDH-1 is composed of 14 different subunits. Subunits NuoB, C, D, E, F, and G constitute the peripheral sector of the complex.

It localises to the cell inner membrane. It carries out the reaction a quinone + NADH + 5 H(+)(in) = a quinol + NAD(+) + 4 H(+)(out). Functionally, NDH-1 shuttles electrons from NADH, via FMN and iron-sulfur (Fe-S) centers, to quinones in the respiratory chain. The immediate electron acceptor for the enzyme in this species is believed to be ubiquinone. Couples the redox reaction to proton translocation (for every two electrons transferred, four hydrogen ions are translocated across the cytoplasmic membrane), and thus conserves the redox energy in a proton gradient. The protein is NADH-quinone oxidoreductase subunit C of Novosphingobium aromaticivorans (strain ATCC 700278 / DSM 12444 / CCUG 56034 / CIP 105152 / NBRC 16084 / F199).